The following is a 461-amino-acid chain: Methylthioribose transporter (461 aa).

Helical transmembrane passes span 33–53, 56–76, 102–122, 152–172, 185–205, 213–233, 254–274, 301–321, 355–375, 376–396, 409–429, and 432–452; these read LLGI…TVAA, AGPA…LAAF, LLAF…LSAV, MAGA…TAIV, VIVL…IGYV, FMPF…FAYL, VGII…SLVL, VAGI…LALL, TWLT…GTLA, HLVN…VIVL, VPFV…FMYS, and GVTW…YFLY.

It belongs to the amino acid-polyamine-organocation (APC) superfamily.

It is found in the cell membrane. Involved in import of methylthioribose (MTR) into the cell. The polypeptide is Methylthioribose transporter (Bacillus subtilis (strain 168)).